Reading from the N-terminus, the 561-residue chain is Lysine--tRNA ligase (561 aa).

The Mg(2+) site is built by Glu409 and Glu416.

It belongs to the class-II aminoacyl-tRNA synthetase family. Homodimer. Requires Mg(2+) as cofactor.

The protein resides in the cytoplasm. It carries out the reaction tRNA(Lys) + L-lysine + ATP = L-lysyl-tRNA(Lys) + AMP + diphosphate. This is Lysine--tRNA ligase from Trichormus variabilis (strain ATCC 29413 / PCC 7937) (Anabaena variabilis).